The primary structure comprises 220 residues: Mediator of RNA polymerase II transcription subunit 19 (220 aa).

The segment at 171–220 (AFDLDGTGKSQSGSNSGNNSKKRKNKSSGSSMATPTHSDSHEDMKRRRLE) is disordered. Over residues 178-189 (GKSQSGSNSGNN) the composition is skewed to low complexity. The segment covering 208–220 (SDSHEDMKRRRLE) has biased composition (basic and acidic residues).

Belongs to the Mediator complex subunit 19 family. As to quaternary structure, component of the Mediator complex, which is composed of at least 21 subunits that form three structurally distinct submodules. The Mediator head module contains MED6, MED8, MED11, SRB4/MED17, SRB5/MED18, ROX3/MED19, SRB2/MED20 and SRB6/MED22, the middle module contains MED1, MED4, NUT1/MED5, MED7, CSE2/MED9, NUT2/MED10, SRB7/MED21 and SOH1/MED31, and the tail module contains MED2, PGD1/MED3, RGR1/MED14, GAL11/MED15 and SIN4/MED16. The head and the middle modules interact directly with RNA polymerase II, whereas the elongated tail module interacts with gene-specific regulatory proteins.

Its subcellular location is the nucleus. Component of the Mediator complex, a coactivator involved in the regulated transcription of nearly all RNA polymerase II-dependent genes. Mediator functions as a bridge to convey information from gene-specific regulatory proteins to the basal RNA polymerase II transcription machinery. The Mediator complex, having a compact conformation in its free form, is recruited to promoters by direct interactions with regulatory proteins and serves for the assembly of a functional preinitiation complex with RNA polymerase II and the general transcription factors. The Mediator complex unfolds to an extended conformation and partially surrounds RNA polymerase II, specifically interacting with the unphosphorylated form of the C-terminal domain (CTD) of RNA polymerase II. The Mediator complex dissociates from the RNA polymerase II holoenzyme and stays at the promoter when transcriptional elongation begins. This Saccharomyces cerevisiae (strain ATCC 204508 / S288c) (Baker's yeast) protein is Mediator of RNA polymerase II transcription subunit 19 (ROX3).